A 574-amino-acid polypeptide reads, in one-letter code: Sulfate adenylyltransferase (574 aa).

Residues 1 to 170 form an N-terminal region; that stretch reads MANPPHGGVL…VEAIDRLEHY (170 aa). The tract at residues 171 to 395 is catalytic; the sequence is DYVGLRYTPA…LRESHPPRNQ (225 aa). Gln198 serves as a coordination point for sulfate. ATP is bound by residues 198–201 and 292–295; these read QTRN and GRDH. Active-site residues include Thr199, Arg200, and Asn201. Residue Arg200 coordinates sulfate. Sulfate is bound at residue Ala296. Met334 is a binding site for ATP. The interval 396–574 is allosteric regulation domain; adenylyl-sulfate kinase-like; the sequence is QGFTVFLTGY…LESQGLLTQL (179 aa). 3'-phosphoadenylyl sulfate-binding positions include 435 to 438, Arg452, 478 to 479, and Arg516; these read ETVR and IA.

This sequence in the N-terminal section; belongs to the sulfate adenylyltransferase family. In the C-terminal section; belongs to the APS kinase family. In terms of assembly, homohexamer. Dimer of trimers.

The protein localises to the cytoplasm. The enzyme catalyses sulfate + ATP + H(+) = adenosine 5'-phosphosulfate + diphosphate. The protein operates within sulfur metabolism; hydrogen sulfide biosynthesis; sulfite from sulfate: step 1/3. Allosterically inhibited by 3'-phosphoadenosine 5'-phosphosulfate (PAPS). Functionally, catalyzes the first intracellular reaction of sulfate assimilation, forming adenosine-5'-phosphosulfate (APS) from inorganic sulfate and ATP. Plays an important role in sulfate activation as a component of the biosynthesis pathway of sulfur-containing amino acids. This Phaeosphaeria nodorum (strain SN15 / ATCC MYA-4574 / FGSC 10173) (Glume blotch fungus) protein is Sulfate adenylyltransferase.